The primary structure comprises 278 residues: Tryptophan synthase alpha chain (278 aa).

Residues Glu-50 and Asp-61 each act as proton acceptor in the active site.

It belongs to the TrpA family. As to quaternary structure, tetramer of two alpha and two beta chains.

It catalyses the reaction (1S,2R)-1-C-(indol-3-yl)glycerol 3-phosphate + L-serine = D-glyceraldehyde 3-phosphate + L-tryptophan + H2O. Its pathway is amino-acid biosynthesis; L-tryptophan biosynthesis; L-tryptophan from chorismate: step 5/5. Functionally, the alpha subunit is responsible for the aldol cleavage of indoleglycerol phosphate to indole and glyceraldehyde 3-phosphate. The chain is Tryptophan synthase alpha chain from Afipia carboxidovorans (strain ATCC 49405 / DSM 1227 / KCTC 32145 / OM5) (Oligotropha carboxidovorans).